Consider the following 472-residue polypeptide: ATP-dependent rRNA helicase rrp3 (472 aa).

Residues 1–51 are disordered; the sequence is MPDVKKRKIAHEAPEHGSDAESTSSHESVAQQDDTAETQDEAAATETRPAP. Residues 10-19 are compositionally biased toward basic and acidic residues; the sequence is AHEAPEHGSD. The segment covering 20–29 has biased composition (polar residues); that stretch reads AESTSSHESV. The short motif at 52–80 is the Q motif element; that stretch reads KSFKDLGIIDQLCEACETMGYKAPTPIQA. The Helicase ATP-binding domain occupies 83–254; the sequence is IPLALQGRDL…RASLSNPLRV (172 aa). An ATP-binding site is contributed by 96–103; sequence AETGSGKT. Residues 202 to 205 carry the DEAD box motif; sequence DEAD. In terms of domain architecture, Helicase C-terminal spans 282 to 426; it reads YLVYLLNEFV…EYELEKDEVM (145 aa). Residues 451 to 472 form a disordered region; the sequence is GTKAKKFGKGKRSRDEMDQEEG. The segment covering 452–462 has biased composition (basic residues); it reads TKAKKFGKGKR.

This sequence belongs to the DEAD box helicase family. DDX47/RRP3 subfamily. Interacts with the SSU processome.

It localises to the nucleus. It catalyses the reaction ATP + H2O = ADP + phosphate + H(+). ATP-dependent rRNA helicase required for pre-ribosomal RNA processing. Involved in the maturation of the 35S-pre-rRNA and to its cleavage to mature 18S rRNA. This chain is ATP-dependent rRNA helicase rrp3, found in Neosartorya fischeri (strain ATCC 1020 / DSM 3700 / CBS 544.65 / FGSC A1164 / JCM 1740 / NRRL 181 / WB 181) (Aspergillus fischerianus).